A 691-amino-acid polypeptide reads, in one-letter code: WD repeat-containing protein 48 homolog (691 aa).

WD repeat units follow at residues 27-82 (LHRS…PVQY), 88-130 (RHTD…YLDS), 133-168 (LHTDYVSCLAYAPLAEKVVSASFDRNIFVYDVNSNF), 180-219 (GCKNSIYSLATTPNLSHCLFFSPHQQIRMFDPRTNDKPMK), 222-261 (GHSDNVRALLLNDDGTRALSAGSDGTIRLWDIGMQKNIAT), 264-303 (AHEEGVWTIQVDASFKFVYSGGRDRYVLKSPVNDLSKFQV), 306-347 (KEEA…QNSN), and 399-438 (SGAPAINKYKILNDKRHVLTSDTEDNVALYDVLAGKKVKE).

This sequence belongs to the WD repeat WDR48 family. As to quaternary structure, interacts with usp-46; the interaction increases the catalytic activity of usp-46 in the presence of wdr-20.

Its function is as follows. Together with wdr-20, binds to and stimulates the activity of the deubiquitinating enzyme usp-46, leading to deubiquitination and stabilization of the glr-1 glutamate receptor. This Caenorhabditis briggsae protein is WD repeat-containing protein 48 homolog (wdr-48).